A 1117-amino-acid polypeptide reads, in one-letter code: Guanylate cyclase D (1117 aa).

The first 66 residues, 1 to 66 (MAGLQQGCHF…ADSLSLLAWA (66 aa)), serve as a signal peptide directing secretion. Topologically, residues 67–479 (RETFTLGVLG…CIRGVQPLGS (413 aa)) are extracellular. A disulfide bridge links Cys-121 with Cys-149. Residues 480 to 500 (LLTLTIACVLALVGGFLAYFI) traverse the membrane as a helical segment. Residues 501 to 1117 (RLGLQQLRLL…RKSGEAGPGP (617 aa)) are Cytoplasmic-facing. Positions 529–557 (TPSRRRPHVDSGSESRSVVDGGSPRSVTQ) are disordered. The Protein kinase domain maps to 541–812 (SESRSVVDGG…PSLDQIYTQF (272 aa)). Positions 874–915 (MGTTVEPEYFDQVTIYFSDIVGFTTISALSEPIEVVGFLNDL) are interaction with NCALD. Residues 887-1017 (TIYFSDIVGF…DTVNTASRME (131 aa)) form the Guanylate cyclase domain. The interval 1096–1117 (GFAKARQGLAEPRKSGEAGPGP) is disordered.

This sequence belongs to the adenylyl cyclase class-4/guanylyl cyclase family. As to quaternary structure, interacts (via the catalytic domain) with NCALD. In terms of tissue distribution, found in a subset of olfactory neurons in the main olfactory epithelium.

The protein resides in the cell projection. The protein localises to the cilium membrane. The enzyme catalyses GTP = 3',5'-cyclic GMP + diphosphate. Activated by Ca(2+). In terms of biological role, functions as an olfactory receptor activated by urine odorants, uroguanylin and guanylin and as well by the volatile semiochemicals carbon disulfide (CS2) and carbon dioxide (CO2). Has guanylate cyclase activity upon binding of the ligand. Activation of GUCY2D neurons leads to the cGMP-dependent activation of the CNGA3 channels, membrane depolarization and an increase in action potential frequency. Signaling pathways activated by GUCY2D may trigger social behaviors such as acquisition of food preference. The protein is Guanylate cyclase D of Mus musculus (Mouse).